The following is a 515-amino-acid chain: Probable multifunctional siroheme biosynthesis protein HemA (515 aa).

Residues 26–27 (SL) and 47–48 (IR) contribute to the NAD(+) site. Residues 26 to 174 (SLDYKSAAID…TAAKKAKTEI (149 aa)) are glutamyl-tRNA reductase. L-glutamyl-tRNA(Glu)-binding positions include 68 to 71 (TCNR), S127, E132, and Q138. Catalysis depends on C69, which acts as the Nucleophile. An NADP(+)-binding site is contributed by 206-211 (GNGEIG). The segment at 367-507 (FPLFIDLSGK…SLVKSVAEQI (141 aa)) is precorrin-2 dehydrogenase /sirohydrochlorin ferrochelatase.

In the N-terminal section; belongs to the glutamyl-tRNA reductase family. It in the C-terminal section; belongs to the precorrin-2 dehydrogenase / sirohydrochlorin ferrochelatase family. Homodimer.

It catalyses the reaction (S)-4-amino-5-oxopentanoate + tRNA(Glu) + NADP(+) = L-glutamyl-tRNA(Glu) + NADPH + H(+). The catalysed reaction is precorrin-2 + NAD(+) = sirohydrochlorin + NADH + 2 H(+). It carries out the reaction siroheme + 2 H(+) = sirohydrochlorin + Fe(2+). The protein operates within cofactor biosynthesis; adenosylcobalamin biosynthesis; sirohydrochlorin from precorrin-2: step 1/1. Its pathway is porphyrin-containing compound metabolism; siroheme biosynthesis; siroheme from sirohydrochlorin: step 1/1. It functions in the pathway porphyrin-containing compound metabolism; siroheme biosynthesis; sirohydrochlorin from precorrin-2: step 1/1. It participates in porphyrin-containing compound metabolism; protoporphyrin-IX biosynthesis; 5-aminolevulinate from L-glutamyl-tRNA(Glu): step 1/2. Its function is as follows. Multifunctional enzyme that catalyzes the NADPH-dependent reduction of glutamyl-tRNA(Glu) to glutamate 1-semialdehyde (GSA), the NAD-dependent ring dehydrogenation of precorrin-2 to sirohydrochlorin and finally, the ferrochelation of sirohydrochlorin to yield siroheme. This Ruminiclostridium josui (Clostridium josui) protein is Probable multifunctional siroheme biosynthesis protein HemA.